We begin with the raw amino-acid sequence, 529 residues long: All-trans-zeta-carotene desaturase (529 aa).

12-45 is an FAD binding site; sequence IVVGAGPGGLSAAINLAGQGFRVTVVEKDAVPGG.

Belongs to the carotenoid/retinoid oxidoreductase family. FAD serves as cofactor.

The enzyme catalyses all-trans-zeta-carotene + 2 A = all-trans-lycopene + 2 AH2. It functions in the pathway carotenoid biosynthesis; lycopene biosynthesis. Functionally, dehydrogenates carotenes in the trans conformation: converts all-trans-zeta-carotene into all-trans-lycopene, one of the last dehydrogenation steps of lycopene biosynthesis. In Myxococcus xanthus, this protein is All-trans-zeta-carotene desaturase (carC).